Reading from the N-terminus, the 319-residue chain is Ribosomal RNA small subunit methyltransferase H (319 aa).

Residues A35–H37, D55, F84, D104, and Q111 contribute to the S-adenosyl-L-methionine site.

The protein belongs to the methyltransferase superfamily. RsmH family.

Its subcellular location is the cytoplasm. It catalyses the reaction cytidine(1402) in 16S rRNA + S-adenosyl-L-methionine = N(4)-methylcytidine(1402) in 16S rRNA + S-adenosyl-L-homocysteine + H(+). Its function is as follows. Specifically methylates the N4 position of cytidine in position 1402 (C1402) of 16S rRNA. This chain is Ribosomal RNA small subunit methyltransferase H, found in Enterococcus hirae.